Consider the following 866-residue polypeptide: MEDRHRYLFFIFAIIHYVQAQQGFISLDCGLPSNEPPYIEPVTGLVFSSDADHIPSGISGRIQKNLEAVHIKPYLFLRYFPDGLRNCYTLDVLQNRRYMIKAVFVYGNYDGYNDYPSFDLYLGPNKWVRVDLEGKVNGSVEEIIHIPSSNSLQICLVKTGNSLPFISALELRLLRNDTYVVQDVSLKHLFRRYYRQSDRLIRYPDDVYDRVWSPFFLPEWTQITTSLDVNNSNNYEPPKAALTSAATPGDNGTRLTIIWTLDNPDEQIHLYVHFAELEPVGENTDEALRTLFTRTFYFVVNGKISYDESITPLDLAVSTVETVVNKCDGGNCSLQLVRSEASPGVRVPLVNAMEAFTAIKFPHSETNPDDVISIKVIQATYELSRVDWQGDPCLPQQFLWTGLNCSYMNMSTSPRIISLDLSSHKLTGKIVPDIQNLTQLQKLDLSNNKLTGGVPEFLANMKSLLFINLSNNNLVGSIPQALLDRKNLKLEFEGNPKLCATGPCNSSSGNKETTVIAPVAAAIAIFIAVLVLIIVFIKKRPSSIRALHPSRANLSLENKKRRITYSEILLMTNNFERVIGEGGFGVVYHGYLNDSEQVAVKVLSPSSSQGYKEFKAEVELLLRVHHINLVSLVGYCDEQAHLALIYEYMANGDLKSHLSGKHGDCVLKWENRLSIAVETALGLEYLHSGCKPLMVHRDVKSMNILLDEHFQAKLADFGLSRSFSVGEESHVSTGVVGTPGYLDPEYYRTYRLTEKSDVYSFGIVLLEIITNQPVLEQANENRHIAERVRTMLTRSDISTIVDPNLIGEYDSGSVRKALKLAMSCVDPSPVARPDMSHVVQELKQCIKSENLRLRTGLNQVIDSKSS.

The signal sequence occupies residues M1–A20. The Extracellular portion of the chain corresponds to Q21–V515. N-linked (GlcNAc...) asparagine glycosylation is found at N137, N176, N230, N251, N331, N404, N409, and N436. LRR repeat units follow at residues R415–T438, Q439–M461, and S463–R485. N-linked (GlcNAc...) asparagine glycans are attached at residues N468 and N505. The helical transmembrane segment at I516–F536 threads the bilayer. At I537–S866 the chain is on the cytoplasmic side. T564 is subject to Phosphothreonine. One can recognise a Protein kinase domain in the interval N573–I846. ATP contacts are provided by residues I579–V587 and K601. Y646 carries the phosphotyrosine modification. D698 functions as the Proton acceptor in the catalytic mechanism. S732 carries the phosphoserine modification. Phosphothreonine occurs at positions 733 and 738. Y746 carries the post-translational modification Phosphotyrosine.

This sequence belongs to the protein kinase superfamily. Ser/Thr protein kinase family.

The protein localises to the membrane. It catalyses the reaction L-seryl-[protein] + ATP = O-phospho-L-seryl-[protein] + ADP + H(+). The catalysed reaction is L-threonyl-[protein] + ATP = O-phospho-L-threonyl-[protein] + ADP + H(+). The sequence is that of Probable LRR receptor-like serine/threonine-protein kinase At5g16900 from Arabidopsis thaliana (Mouse-ear cress).